A 434-amino-acid polypeptide reads, in one-letter code: Alpha-enolase (434 aa).

S2 carries the post-translational modification N-acetylserine. At K5 the chain carries N6-acetyllysine. Position 27 is a phosphoserine (S27). A Mg(2+)-binding site is contributed by S40. Position 44 is a phosphotyrosine (Y44). K60 is modified (N6-acetyllysine; alternate). K60 bears the N6-succinyllysine; alternate mark. 2 positions are modified to N6-acetyllysine: K64 and K71. N6-acetyllysine; alternate is present on K89. An N6-succinyllysine; alternate modification is found at K89. K92 and K126 each carry N6-acetyllysine. Substrate is bound by residues H158 and E167. N6-acetyllysine is present on residues K193 and K199. K202 is modified (N6-acetyllysine; alternate). K202 is covalently cross-linked (Glycyl lysine isopeptide (Lys-Gly) (interchain with G-Cter in SUMO2); alternate). E210 (proton donor) is an active-site residue. N6-acetyllysine; alternate is present on residues K228 and K233. K228 carries the N6-succinyllysine; alternate modification. At K228 the chain carries N6-(2-hydroxyisobutyryl)lysine; alternate. Residue K233 is modified to N6-malonyllysine; alternate. D245 lines the Mg(2+) pocket. S254 bears the Phosphoserine mark. Position 256 is an N6-acetyllysine (K256). Residues S263 and S272 each carry the phosphoserine modification. K281 bears the N6-acetyllysine; alternate mark. K281 carries the N6-(2-hydroxyisobutyryl)lysine; alternate modification. The residue at position 285 (K285) is an N6-acetyllysine. Position 287 is a phosphotyrosine (Y287). A Phosphoserine modification is found at S291. E293 and D318 together coordinate Mg(2+). E293 and D318 together coordinate substrate. An N6-acetyllysine mark is found at K335 and K343. The active-site Proton acceptor is the K343. Substrate is bound by residues 370 to 373 (SHRS) and K394. The tract at residues 405 to 434 (AKYNQLLRIEEELGSKAKFAGRNFRNPLAK) is required for interaction with PLG. K406 carries the post-translational modification N6-acetyllysine. K420 carries the N6-acetyllysine; alternate modification. K420 is subject to N6-succinyllysine; alternate. K420 carries the N6-malonyllysine; alternate modification.

It belongs to the enolase family. Mammalian enolase is composed of 3 isozyme subunits, alpha, beta and gamma, which can form homodimers or heterodimers which are cell-type and development-specific. ENO1 interacts with PLG in the neuronal plasma membrane and promotes its activation. The C-terminal lysine is required for this binding. Interacts with ENO4 and PGAM2. Interacts with CMTM6. It depends on Mg(2+) as a cofactor. ISGylated. In terms of processing, lysine 2-hydroxyisobutyrylation (Khib) by p300/EP300 activates the phosphopyruvate hydratase activity.

The protein resides in the cytoplasm. It localises to the cell membrane. It catalyses the reaction (2R)-2-phosphoglycerate = phosphoenolpyruvate + H2O. It functions in the pathway carbohydrate degradation; glycolysis; pyruvate from D-glyceraldehyde 3-phosphate: step 4/5. Glycolytic enzyme the catalyzes the conversion of 2-phosphoglycerate to phosphoenolpyruvate. In addition to glycolysis, involved in various processes such as growth control, hypoxia tolerance and allergic responses. May also function in the intravascular and pericellular fibrinolytic system due to its ability to serve as a receptor and activator of plasminogen on the cell surface of several cell-types such as leukocytes and neurons. Stimulates immunoglobulin production. The chain is Alpha-enolase (ENO1) from Macaca fascicularis (Crab-eating macaque).